The following is a 112-amino-acid chain: uncharacterized protein (112 aa).

Helical transmembrane passes span 33-53 (IIGI…MIIF) and 69-89 (MNNI…HITV).

Its subcellular location is the membrane. This is an uncharacterized protein from Saccharomyces cerevisiae (strain ATCC 204508 / S288c) (Baker's yeast).